The sequence spans 82 residues: Small ribosomal subunit protein bS16 (82 aa).

The protein belongs to the bacterial ribosomal protein bS16 family.

The sequence is that of Small ribosomal subunit protein bS16 from Actinobacillus pleuropneumoniae serotype 5b (strain L20).